The sequence spans 517 residues: Synaptic vesicular amine transporter (517 aa).

Over 1 to 20 (MALSDLVLLRWLRDSRHSRK) the chain is Cytoplasmic. The chain crosses the membrane as a helical span at residues 21-41 (LILFIVFLALLLDNMLLTVVV). Over 42-132 (PIIPSYLYSI…EDKDLLNENV (91 aa)) the chain is Extracellular. N-linked (GlcNAc...) asparagine glycans are attached at residues Asn56, Asn83, Asn84, Asn91, and Asn113. The tract at residues 100-119 (ESPKATTTQHTVTNTTVPPD) is disordered. A compositionally biased stretch (low complexity) spans 105 to 115 (TTTQHTVTNTT). Residues Cys120 and Cys327 are joined by a disulfide bond. A helical membrane pass occupies residues 133–153 (QVGLLFASKATVQLLTNPFIG). Residues 154–162 (LLTNRIGYP) are Cytoplasmic-facing. A helical membrane pass occupies residues 163 to 183 (IPMFAGFCIMFISTVMFAFSS). The Extracellular segment spans residues 184–192 (SYAFLLIAR). Residues 193-213 (SLQGIGSSCSSVAGMGMLASV) form a helical membrane-spanning segment. At 214-222 (YTDDEERGN) the chain is on the cytoplasmic side. Residues 223–245 (AMGIALGGLAMGVLVGPPFGSVL) traverse the membrane as a helical segment. Serotonin is bound by residues Leu231 and Val235. Residues 246 to 251 (YEFVGK) are Extracellular-facing. A helical transmembrane segment spans residues 252–274 (TAPFLVLAALVLLDGAIQLFVLQ). At 275-294 (PSRVQPESQKGTPLTTLLKD) the chain is on the cytoplasmic side. Residues 295-314 (PYILIAAGSICFANMGIAML) form a helical membrane-spanning segment. Serotonin contacts are provided by Asn308, Ile311, Glu315, Phe337, and Tyr344. Over 315 to 331 (EPALPIWMMETMCSRKW) the chain is Extracellular. Residues 332 to 355 (QLGVAFLPASISYLIGTNIFGILA) form a helical membrane-spanning segment. Residues 356–360 (HKMGR) are Cytoplasmic-facing. The helical transmembrane segment at 361–381 (WLCALLGMIVVGISILCIPFA) threads the bilayer. Topologically, residues 382–392 (KNIYGLIAPNF) are extracellular. Residues 393–413 (GVGFAIGMVDSSMMPIMGYLV) traverse the membrane as a helical segment. Asp402 contacts serotonin. Residues 414 to 417 (DLRH) are Cytoplasmic-facing. Residues 418–438 (VSVYGSVYAIADVAFCMGYAI) traverse the membrane as a helical segment. A serotonin-binding site is contributed by Tyr436. The Extracellular portion of the chain corresponds to 439-443 (GPSAG). Residues 444 to 465 (GAIAKAIGFPWLMTIIGIIDIV) form a helical membrane-spanning segment. The Cytoplasmic segment spans residues 466–517 (FAPLCFFLRSPPAKEEKMAILMDHNCPIKTKMYTQNNVQPYPVGDDEESESD). Ser514 and Ser516 each carry phosphoserine; by CK2.

This sequence belongs to the major facilitator superfamily. Vesicular transporter family. In terms of assembly, interacts with SLC6A3. In terms of tissue distribution, expressed in striata and substantia nigra.

It localises to the cytoplasmic vesicle. The protein localises to the secretory vesicle. The protein resides in the synaptic vesicle membrane. It is found in the secretory vesicle membrane. Its subcellular location is the cell projection. It localises to the axon. The protein localises to the dendrite. It catalyses the reaction serotonin(in) + 2 H(+)(out) = serotonin(out) + 2 H(+)(in). The catalysed reaction is dopamine(in) + 2 H(+)(out) = dopamine(out) + 2 H(+)(in). It carries out the reaction histamine(in) + 2 H(+)(out) = histamine(out) + 2 H(+)(in). With respect to regulation, strongly inhibited by reserpine and tetrabenazine. Also inhibited to a lesser extent by ketanserin and fenfluramine. Reserpine and ketanserin inhibit by blocking the substrate-binding pocket. Tetrabenazine traps SLC18A2/VMAT2 in an occluded conformation and its inhibition is specific to SLC18A2/VMAT2 but not SLC18A1/VMAT1. Its function is as follows. Electrogenic antiporter that exchanges one cationic monoamine with two intravesicular protons across the membrane of secretory and synaptic vesicles. Uses the electrochemical proton gradient established by the V-type proton-pump ATPase to accumulate high concentrations of monoamines inside the vesicles prior to their release via exocytosis. Transports a variety of catecholamines such as dopamine, adrenaline and noradrenaline, histamine, and indolamines such as serotonin. Regulates the transvesicular monoaminergic gradient that determines the quantal size. Mediates somatodendritic dopamine release in hippocampal neurons, likely as part of a regulated secretory pathway that integrates retrograde synaptic signals. Acts as a primary transporter for striatal dopamine loading ensuring impulse-dependent release of dopamine at the synaptic cleft. Responsible for histamine and serotonin storage and subsequent corelease from mast cell granules. In Mus musculus (Mouse), this protein is Synaptic vesicular amine transporter (Slc18a2).